Consider the following 342-residue polypeptide: L-threonine 3-dehydrogenase (342 aa).

A Zn(2+)-binding site is contributed by cysteine 38. Residues threonine 40 and histidine 43 each act as charge relay system in the active site. Zn(2+) is bound by residues histidine 63 and glutamate 64. Residues isoleucine 175, aspartate 195, arginine 200, 263–265 (LGI), and 287–288 (VY) contribute to the NAD(+) site.

It belongs to the zinc-containing alcohol dehydrogenase family. In terms of assembly, homotetramer. The cofactor is Zn(2+).

It is found in the cytoplasm. It carries out the reaction L-threonine + NAD(+) = (2S)-2-amino-3-oxobutanoate + NADH + H(+). It functions in the pathway amino-acid degradation; L-threonine degradation via oxydo-reductase pathway; glycine from L-threonine: step 1/2. Its function is as follows. Catalyzes the NAD(+)-dependent oxidation of L-threonine to 2-amino-3-ketobutyrate. This Ruegeria pomeroyi (strain ATCC 700808 / DSM 15171 / DSS-3) (Silicibacter pomeroyi) protein is L-threonine 3-dehydrogenase.